We begin with the raw amino-acid sequence, 222 residues long: uncharacterized protein (222 aa).

Residues 7-26 (ICLVSLICISGIYFGYQYYQ) traverse the membrane as a helical segment. The SPOR domain maps to 139 to 222 (CRSNAGYKVQ…AYNKQSCVLK (84 aa)).

It localises to the membrane. This is an uncharacterized protein from Rickettsia prowazekii (strain Madrid E).